The sequence spans 1195 residues: Zinc finger and BTB domain-containing protein 38 (1195 aa).

The BTB domain occupies 33 to 100 (CDVTIIVEDT…IYSSTVVVKR (68 aa)). K43 participates in a covalent cross-link: Glycyl lysine isopeptide (Lys-Gly) (interchain with G-Cter in SUMO2). The residue at position 130 (S130) is a Phosphoserine. Glycyl lysine isopeptide (Lys-Gly) (interchain with G-Cter in SUMO2) cross-links involve residues K145, K148, K151, and K259. Residues 264–334 (RKPKTFSIPQ…QSSDVPGPPA (71 aa)) are disordered. Polar residues predominate over residues 270 to 280 (SIPQDSDSATE). The interval 300–523 (PAAVLTRSKS…RRYQCIFCLE (224 aa)) is interaction with CBFA2T3. S309 carries the post-translational modification Phosphoserine. Over residues 314 to 323 (GDVHFSREDE) the composition is skewed to basic and acidic residues. A C2H2-type 1 zinc finger spans residues 342-364 (YNCSCCSKAFDSSTLLSAHMQLH). The C2H2-type 2; degenerate zinc finger occupies 371–395 (LVCKYCNKQFTTLNRLDRHEQICMR). C2H2-type zinc fingers lie at residues 460–482 (YSCV…ANVH), 488–510 (YPCH…EIWH), and 516–539 (YQCI…KSFH). Glycyl lysine isopeptide (Lys-Gly) (interchain with G-Cter in SUMO2) cross-links involve residues K550, K557, K754, K758, K763, K804, K814, K821, K842, K850, and K857. The tract at residues 745-804 (SDPAVSQSLKDDSKPEPDKVGRFASRPKSIKEKKKTTSHTRGEIPEESNYVADPGGSLSK) is disordered. Residues 753 to 765 (LKDDSKPEPDKVG) show a composition bias toward basic and acidic residues. Disordered stretches follow at residues 871-891 (QEEP…PLGL) and 903-922 (FDDA…YYNY). Residues K923, K964, K969, K977, K981, K991, K1017, and K1026 each participate in a glycyl lysine isopeptide (Lys-Gly) (interchain with G-Cter in SUMO2) cross-link. 5 C2H2-type zinc fingers span residues 1010–1032 (YACE…MRCH), 1038–1060 (YQCK…ERIH), 1066–1088 (FVCQ…ERIH), 1094–1116 (YHCQ…EQRH), and 1125–1147 (YACF…QKKH). Glycyl lysine isopeptide (Lys-Gly) (interchain with G-Cter in SUMO2) cross-links involve residues K1109, K1132, K1135, K1150, and K1183.

Interacts with CBFA2T3. Interacts with ZBTB4. Interacts with RBBP6. In terms of processing, ubiquitinated by RBBP6; leading to its degradation by the proteasome.

It is found in the nucleus. It localises to the chromosome. Functionally, transcriptional regulator with bimodal DNA-binding specificity. Binds with a higher affinity to methylated CpG dinucleotides in the consensus sequence 5'-CGCG-3' but can also bind to E-box elements (5'-CACGTG-3'). Can also bind specifically to a single methyl-CpG pair. Represses transcription in a methyl-CpG-dependent manner. Plays an important role in regulating DNA replication and common fragile sites (CFS) stability in a RBBP6- and MCM10-dependent manner; represses expression of MCM10 which plays an important role in DNA-replication. Acts as a transcriptional activator. May be involved in the differentiation and/or survival of late postmitotic neurons. The polypeptide is Zinc finger and BTB domain-containing protein 38 (Homo sapiens (Human)).